The primary structure comprises 685 residues: Frizzled-8 (685 aa).

The N-terminal stretch at 1–27 (MEWGYLLEVTSLLAALAVLQRSSGAAA) is a signal peptide. Residues 28–272 (ASAKELACQE…NPFFSQDERA (245 aa)) are Extracellular-facing. Residues 30-151 (AKELACQEIT…GNPDTLCMDY (122 aa)) form the FZ domain. Intrachain disulfides connect Cys-35–Cys-96, Cys-43–Cys-89, Cys-80–Cys-118, Cys-107–Cys-148, and Cys-111–Cys-135. N-linked (GlcNAc...) asparagine glycosylation is present at Asn-49. Position 71–78 (71–78 (QFWPLVEI)) interacts with hexadecanoate. The tract at residues 95 to 100 (ICLEDY) is wnt-binding. The wnt-binding stretch occupies residues 147 to 152 (LCMDYN). The N-linked (GlcNAc...) asparagine glycan is linked to Asn-152. Residues 155-223 (DLTTAAPSPP…KARPPGGGAA (69 aa)) form a disordered region. Residues 161 to 176 (PSPPRRLPPPPPPGEQ) are compositionally biased toward pro residues. 2 stretches are compositionally biased toward low complexity: residues 177–187 (PPSGSGHSRPP) and 200–223 (GSGD…GGAA). Residues 273 to 293 (FTVFWIGLWSVLCFVSTFATV) form a helical membrane-spanning segment. At 294–309 (STFLIDMERFKYPERP) the chain is on the cytoplasmic side. Residues 310-330 (IIFLSACYLFVSVGYLVRLVA) form a helical membrane-spanning segment. The Extracellular portion of the chain corresponds to 331-394 (GHEKVACSGG…RYETTGPALC (64 aa)). A helical transmembrane segment spans residues 395 to 415 (TVVFLLVYFFGMASSIWWVIL). The Cytoplasmic portion of the chain corresponds to 416 to 437 (SLTWFLAAGMKWGNEAIAGYSQ). A helical membrane pass occupies residues 438–458 (YFHLAAWLVPSVKSIAVLALS). The Extracellular segment spans residues 459–481 (SVDGDPVAGICYVGNQSLDNLRG). Residue Asn-473 is glycosylated (N-linked (GlcNAc...) asparagine). The helical transmembrane segment at 482 to 502 (FVLAPLVIYLFIGTMFLLAGF) threads the bilayer. At 503–530 (VSLFRIRSVIKQQGGPTKTHKLEKLMIR) the chain is on the cytoplasmic side. The helical transmembrane segment at 531–551 (LGLFTVLYTVPAAVVVACLFY) threads the bilayer. Over 552 to 582 (EQHNRPRWEATHNCPCLRDLQPDQARRPDYA) the chain is Extracellular. A helical transmembrane segment spans residues 583–603 (VFMLKYFMCLVVGITSGVWVW). Residues 604–685 (SGKTLESWRA…YPKQMPLSQV (82 aa)) lie on the Cytoplasmic side of the membrane. Residues 606-611 (KTLESW) carry the Lys-Thr-X-X-X-Trp motif, mediates interaction with the PDZ domain of Dvl family members motif. Gly residues predominate over residues 631 to 655 (AGGSGPGGSGPGPGGGGGHGGGGGS). Positions 631 to 656 (AGGSGPGGSGPGPGGGGGHGGGGGSL) are disordered. Residues 683–685 (SQV) carry the PDZ-binding motif.

Belongs to the G-protein coupled receptor Fz/Smo family. In terms of assembly, component of a Wnt-signaling complex that contains a WNT protein, a FZD protein and LRP5 or LRP6. Interacts directly with LRP5 or LRP6; the interaction is promoted by Wnt-binding and signaling and inhibited by DKK1. Interacts (via the PDZ-binding motif) with GPOC (via its PDZ domain). Interacts with RSPO1 and RSPO3. Interacts with glypican GPC3. Ubiquitinated by ZNRF3, leading to its degradation by the proteasome. As to expression, expressed in chondrocytes.

It is found in the membrane. The protein localises to the golgi apparatus. The protein resides in the cell membrane. Its function is as follows. Receptor for Wnt proteins. Component of the Wnt-Fzd-LRP5-LRP6 complex that triggers beta-catenin signaling through inducing aggregation of receptor-ligand complexes into ribosome-sized signalosomes. The beta-catenin canonical signaling pathway leads to the activation of disheveled proteins, inhibition of GSK-3 kinase, nuclear accumulation of beta-catenin and activation of Wnt target genes. A second signaling pathway involving PKC and calcium fluxes has been seen for some family members, but it is not yet clear if it represents a distinct pathway or if it can be integrated in the canonical pathway, as PKC seems to be required for Wnt-mediated inactivation of GSK-3 kinase. Both pathways seem to involve interactions with G-proteins. May be involved in transduction and intercellular transmission of polarity information during tissue morphogenesis and/or in differentiated tissues. Coreceptor along with RYK of Wnt proteins, such as WNT1. In Mus musculus (Mouse), this protein is Frizzled-8 (Fzd8).